The sequence spans 183 residues: Mitochondrial import inner membrane translocase subunit tim17 (183 aa).

3 helical membrane-spanning segments follow: residues 13–33 (AGGA…GLGF), 57–77 (GGNF…LSYI), and 107–127 (VQAA…QHMM). The segment covering 131 to 141 (MQAQQEEMTQQ) has biased composition (polar residues). Residues 131-183 (MQAQQEEMTQQHLEERKRYEEERKQREGERKKLNENGKSKKNKQQQNGENDLD) are disordered. Over residues 142 to 168 (HLEERKRYEEERKQREGERKKLNENGK) the composition is skewed to basic and acidic residues. Positions 174 to 183 (QQQNGENDLD) are enriched in low complexity.

It belongs to the Tim17/Tim22/Tim23 family.

It localises to the mitochondrion inner membrane. Its function is as follows. May be involved in the translocation of transit peptide-containing proteins across the mitochondrial inner membrane. This chain is Mitochondrial import inner membrane translocase subunit tim17 (timm17), found in Dictyostelium discoideum (Social amoeba).